Here is a 585-residue protein sequence, read N- to C-terminus: Arginine--tRNA ligase (585 aa).

The short motif at 131–141 is the 'HIGH' region element; that stretch reads ANPTGPMHVGH.

It belongs to the class-I aminoacyl-tRNA synthetase family. In terms of assembly, monomer.

The protein localises to the cytoplasm. It carries out the reaction tRNA(Arg) + L-arginine + ATP = L-arginyl-tRNA(Arg) + AMP + diphosphate. This chain is Arginine--tRNA ligase, found in Rhizobium etli (strain CIAT 652).